Reading from the N-terminus, the 217-residue chain is Adenylate kinase (217 aa).

10–15 (GAGKGT) contributes to the ATP binding site. Residues 30–59 (STGDMLRAQIKAGTELGMKAKAIMDAGGLV) are NMP. AMP-binding positions include T31, R36, 57-59 (GLV), 85-88 (GFPR), and Q92. Positions 122 to 159 (GRRVHVASGRTYHVVFNPPKVAGKDDVTGEDLIQRDDD) are LID. Residues R123 and 132 to 133 (TY) each bind ATP. Positions 156 and 167 each coordinate AMP. G203 contributes to the ATP binding site.

This sequence belongs to the adenylate kinase family. In terms of assembly, monomer.

Its subcellular location is the cytoplasm. It carries out the reaction AMP + ATP = 2 ADP. Its pathway is purine metabolism; AMP biosynthesis via salvage pathway; AMP from ADP: step 1/1. Functionally, catalyzes the reversible transfer of the terminal phosphate group between ATP and AMP. Plays an important role in cellular energy homeostasis and in adenine nucleotide metabolism. This is Adenylate kinase from Thiobacillus denitrificans (strain ATCC 25259 / T1).